The primary structure comprises 497 residues: GDP-fucose protein O-fucosyltransferase 4 (497 aa).

Topologically, residues 1-6 (MACRRR) are cytoplasmic. The helical; Signal-anchor for type II membrane protein transmembrane segment at 7-27 (LLPCAGLGLFGVLCWVWVSFA) threads the bilayer. Residues 28–497 (SFPDDQLPLE…ITERRARGKH (470 aa)) lie on the Lumenal side of the membrane. N-linked (GlcNAc...) asparagine glycosylation is present at Asn-169. A disulfide bridge links Cys-392 with Cys-395. A disordered region spans residues 406–427 (RAHRKDPERNPPPLPKMASNSH). An N-linked (GlcNAc...) asparagine glycan is attached at Asn-474.

It belongs to the glycosyltransferase 10 family.

It localises to the endoplasmic reticulum membrane. The catalysed reaction is L-threonyl-[protein] + GDP-beta-L-fucose = 3-O-(alpha-L-fucosyl)-L-threonyl-[protein] + GDP + H(+). It catalyses the reaction L-seryl-[protein] + GDP-beta-L-fucose = 3-O-(alpha-L-fucosyl)-L-seryl-[protein] + GDP + H(+). The protein operates within protein modification; protein glycosylation. Functionally, protein O-fucosyltransferase that specifically catalyzes O-fucosylation of serine or threonine residues in EMI domains of target proteins. Attaches fucose through an O-glycosidic linkage. O-fucosylation of EMI domain-containing proteins may be required for facilitating protein folding and secretion. The chain is GDP-fucose protein O-fucosyltransferase 4 (fut11) from Oryzias latipes (Japanese rice fish).